Here is a 65-residue protein sequence, read N- to C-terminus: Large ribosomal subunit protein bL35 (65 aa).

Disordered stretches follow at residues Met-1–Lys-23 and Gly-29–His-48. Residues Leu-33–Asp-43 show a composition bias toward basic residues.

Belongs to the bacterial ribosomal protein bL35 family.

This chain is Large ribosomal subunit protein bL35, found in Desulfatibacillum aliphaticivorans.